Reading from the N-terminus, the 497-residue chain is Serine/threonine-protein kinase cst-1 (497 aa).

Residues 1 to 27 form a disordered region; it reads MPPSTDSSRRNSEEGSSDGFKLDSSAL. The 252-residue stretch at 35–286 folds into the Protein kinase domain; that stretch reads FDIVGKLGEG…ALRLCEHTFI (252 aa). Residues 41-49 and K64 contribute to the ATP site; that span reads LGEGSYGSV. D154 serves as the catalytic Proton acceptor. The interval 367–416 is disordered; that stretch reads KSAYIPGSSKNGNSPRVQPPGHTASASDPSKNQPFAQDGTGPNFQLGTSE. Positions 390–416 are enriched in polar residues; the sequence is ASASDPSKNQPFAQDGTGPNFQLGTSE. The SARAH domain occupies 446-493; the sequence is FEFLRNITLDELIRRKESLDSEMEEEIRELQRRYKTKRQPILDVIEIK. A coiled-coil region spans residues 450–486; sequence RNITLDELIRRKESLDSEMEEEIRELQRRYKTKRQPI.

The protein belongs to the protein kinase superfamily. STE Ser/Thr protein kinase family. STE20 subfamily. As to quaternary structure, interacts with rsf-1 (via SARAH domain); the interaction is required for the phosphorylation of cst-1. The cofactor is Mg(2+). Proteolytically cleaved by caspase-3 during apoptosis which results in kinase activation. Post-translationally, phosphorylated. As to expression, widely expressed in epidermal cells.

The catalysed reaction is L-seryl-[protein] + ATP = O-phospho-L-seryl-[protein] + ADP + H(+). The enzyme catalyses L-threonyl-[protein] + ATP = O-phospho-L-threonyl-[protein] + ADP + H(+). Functionally, serine/threonine-protein kinase which extends lifespan and delays tissue aging, probably by activating daf-16. The protein is Serine/threonine-protein kinase cst-1 of Caenorhabditis elegans.